The primary structure comprises 859 residues: Protein EFR3 homolog (859 aa).

The segment covering arginine 696–serine 714 has biased composition (polar residues). Residues arginine 696 to glycine 728 are disordered.

This sequence belongs to the EFR3 family.

The chain is Protein EFR3 homolog from Caenorhabditis elegans.